We begin with the raw amino-acid sequence, 63 residues long: Conotoxin Cal6.28 (63 aa).

The N-terminal stretch at 1–22 (MKLTCVLIVAVLILTACQVIAA) is a signal peptide. Cystine bridges form between Cys-34/Cys-45, Cys-37/Cys-51, and Cys-44/Cys-58.

Belongs to the conotoxin O1 superfamily. Expressed by the venom duct.

The protein localises to the secreted. Functionally, probable neurotoxin. The protein is Conotoxin Cal6.28 of Californiconus californicus (California cone).